The sequence spans 157 residues: Probable succinate transporter subunit YjjB (157 aa).

4 helical membrane passes run 2–22 (GIIS…IPAV), 55–75 (AGFN…SIGI), 87–107 (IFTV…TAMI), and 129–149 (FLKA…PGLW).

It belongs to the ThrE exporter (TC 2.A.79) family. In terms of assembly, the transporter is composed of YjjB and YjjP.

It is found in the cell inner membrane. In terms of biological role, involved in succinate export with YjjP. Both proteins are required for export. The polypeptide is Probable succinate transporter subunit YjjB (Klebsiella pneumoniae (strain 342)).